Consider the following 288-residue polypeptide: Orotidine 5'-phosphate decarboxylase (288 aa).

The active-site Proton donor is Lys-99.

The protein belongs to the OMP decarboxylase family. Type 2 subfamily.

It catalyses the reaction orotidine 5'-phosphate + H(+) = UMP + CO2. It participates in pyrimidine metabolism; UMP biosynthesis via de novo pathway; UMP from orotate: step 2/2. This chain is Orotidine 5'-phosphate decarboxylase (pyrF), found in Myxococcus xanthus (strain DK1622).